A 550-amino-acid chain; its full sequence is Phosphomannomutase (550 aa).

The Phosphoserine intermediate role is filled by S148. Residues S148, D300, D302, and D304 each contribute to the Mg(2+) site.

This sequence belongs to the phosphohexose mutase family. Requires Mg(2+) as cofactor.

The enzyme catalyses alpha-D-mannose 1-phosphate = D-mannose 6-phosphate. This chain is Phosphomannomutase (manB), found in Mycoplasma genitalium (strain ATCC 33530 / DSM 19775 / NCTC 10195 / G37) (Mycoplasmoides genitalium).